Consider the following 450-residue polypeptide: Bifunctional protein GlmU (450 aa).

Positions 1–221 (MRCIVLAAGM…SCEFIGINNR (221 aa)) are pyrophosphorylase. Residues 6–9 (LAAG), Lys-20, Gln-69, 74–75 (GT), 96–98 (YGD), Gly-135, Glu-150, Asn-165, and Asn-219 contribute to the UDP-N-acetyl-alpha-D-glucosamine site. Asp-98 contributes to the Mg(2+) binding site. Asn-219 contributes to the Mg(2+) binding site. The segment at 222–242 (IQLAQAEKFRRQWILEELMIK) is linker. An N-acetyltransferase region spans residues 243-450 (GVTIVDPETT…VIDKRKKEED (208 aa)). Residues Arg-324 and Lys-342 each coordinate UDP-N-acetyl-alpha-D-glucosamine. His-354 (proton acceptor) is an active-site residue. UDP-N-acetyl-alpha-D-glucosamine contacts are provided by Tyr-357 and Asn-368. Positions 371, 396, 414, and 431 each coordinate acetyl-CoA.

This sequence in the N-terminal section; belongs to the N-acetylglucosamine-1-phosphate uridyltransferase family. In the C-terminal section; belongs to the transferase hexapeptide repeat family. In terms of assembly, homotrimer. Mg(2+) serves as cofactor.

The protein resides in the cytoplasm. It carries out the reaction alpha-D-glucosamine 1-phosphate + acetyl-CoA = N-acetyl-alpha-D-glucosamine 1-phosphate + CoA + H(+). It catalyses the reaction N-acetyl-alpha-D-glucosamine 1-phosphate + UTP + H(+) = UDP-N-acetyl-alpha-D-glucosamine + diphosphate. It participates in nucleotide-sugar biosynthesis; UDP-N-acetyl-alpha-D-glucosamine biosynthesis; N-acetyl-alpha-D-glucosamine 1-phosphate from alpha-D-glucosamine 6-phosphate (route II): step 2/2. The protein operates within nucleotide-sugar biosynthesis; UDP-N-acetyl-alpha-D-glucosamine biosynthesis; UDP-N-acetyl-alpha-D-glucosamine from N-acetyl-alpha-D-glucosamine 1-phosphate: step 1/1. It functions in the pathway bacterial outer membrane biogenesis; LPS lipid A biosynthesis. Its function is as follows. Catalyzes the last two sequential reactions in the de novo biosynthetic pathway for UDP-N-acetylglucosamine (UDP-GlcNAc). The C-terminal domain catalyzes the transfer of acetyl group from acetyl coenzyme A to glucosamine-1-phosphate (GlcN-1-P) to produce N-acetylglucosamine-1-phosphate (GlcNAc-1-P), which is converted into UDP-GlcNAc by the transfer of uridine 5-monophosphate (from uridine 5-triphosphate), a reaction catalyzed by the N-terminal domain. The protein is Bifunctional protein GlmU of Pseudothermotoga lettingae (strain ATCC BAA-301 / DSM 14385 / NBRC 107922 / TMO) (Thermotoga lettingae).